The following is a 217-amino-acid chain: Vesicle transport through interaction with t-SNAREs homolog 1A (217 aa).

The Cytoplasmic segment spans residues 1 to 192; that stretch reads MSSDFEGYEQ…GMLRRIIQNR (192 aa). 2 coiled-coil regions span residues 31–92 and 112–178; these read PDEK…KRSR and ENQR…GKSS. The helical transmembrane segment at 193 to 213 threads the bilayer; it reads ILLVILGIIVVITILMAITFS. Over 214-217 the chain is Extracellular; it reads VRRH.

Belongs to the VTI1 family. In terms of assembly, interacts with distinct SNARE complexes that contain either STX5 or STX6. Interacts with NAPA and, to a lesser extent, with NAPG. Identified in a complex containing STX6, STX12, VAMP4 and VTI1A.

It localises to the cytoplasmic vesicle. The protein localises to the golgi apparatus membrane. Its function is as follows. V-SNARE that mediates vesicle transport pathways through interactions with t-SNAREs on the target membrane. These interactions are proposed to mediate aspects of the specificity of vesicle trafficking and to promote fusion of the lipid bilayers. Involved in vesicular transport from the late endosomes to the trans-Golgi network. Along with VAMP7, involved in an non-conventional RAB1-dependent traffic route to the cell surface used by KCNIP1 and KCND2. May be involved in increased cytokine secretion associated with cellular senescence. The polypeptide is Vesicle transport through interaction with t-SNAREs homolog 1A (VTI1A) (Homo sapiens (Human)).